The chain runs to 266 residues: Putative carbamate hydrolase RutD (266 aa).

An AB hydrolase-1 domain is found at 14–115; sequence PVVVLISGLG…TMLVSVNGWL (102 aa).

The protein belongs to the AB hydrolase superfamily. Hydrolase RutD family.

The enzyme catalyses carbamate + 2 H(+) = NH4(+) + CO2. In terms of biological role, involved in pyrimidine catabolism. May facilitate the hydrolysis of carbamate, a reaction that can also occur spontaneously. The polypeptide is Putative carbamate hydrolase RutD (Shigella flexneri serotype 5b (strain 8401)).